The chain runs to 578 residues: Cytochrome P450 monooxygenase fsoE (578 aa).

A helical transmembrane segment spans residues 28–48 (LLMAVAITYAISWINWFFTSW). A heme-binding site is contributed by C517.

Belongs to the cytochrome P450 family. Heme serves as cofactor.

Its subcellular location is the membrane. The catalysed reaction is 3-O-(beta-D-glucopyranosyl)-isomotiol + 2 reduced [NADPH--hemoprotein reductase] + 2 O2 = 2-deacetoxyfuscoatroside + 2 oxidized [NADPH--hemoprotein reductase] + 2 H2O + 3 H(+). It carries out the reaction 3-O-(beta-D-glucopyranosyl)-2alpha-hydroxyisomotiol + 2 reduced [NADPH--hemoprotein reductase] + 2 O2 = 2-deacetylfuscoatroside + 2 oxidized [NADPH--hemoprotein reductase] + 2 H2O + 3 H(+). It catalyses the reaction 3-O-(beta-D-glucopyranosyl)-2alpha-acetoxyisomotiol + 2 reduced [NADPH--hemoprotein reductase] + 2 O2 = fuscoatroside + 2 oxidized [NADPH--hemoprotein reductase] + 2 H2O + 3 H(+). The enzyme catalyses isomotiol + reduced [NADPH--hemoprotein reductase] + O2 = 19beta-hydroxyisomotiol + oxidized [NADPH--hemoprotein reductase] + H2O + H(+). The catalysed reaction is 2alpha-hydroxyisomotiol + reduced [NADPH--hemoprotein reductase] + O2 = 2alpha,19beta-dihydroxyisomotiol + oxidized [NADPH--hemoprotein reductase] + H2O + H(+). It carries out the reaction 2alpha,19beta-dihydroxyisomotiol + reduced [NADPH--hemoprotein reductase] + O2 = 2alpha-hydroxyismotiol-19-one + oxidized [NADPH--hemoprotein reductase] + 2 H2O + H(+). It catalyses the reaction 2alpha-hydroxyismotiol-19-one + 2 reduced [NADPH--hemoprotein reductase] + O2 = 2-deacetyl,3-deglucopyranosyl-fuscoatroside + 2 oxidized [NADPH--hemoprotein reductase] + H2O + 3 H(+). It functions in the pathway secondary metabolite biosynthesis; terpenoid biosynthesis. Its function is as follows. Cytochrome P450 monooxygenase; part of the gene cluster that mediates the biosynthesis of the enfumafungin-type antibiotic, fuscoatroside. Within the pathway, fsoE catalyzes the oxidative cleavage of the c19-C20 bond within the E-ring, resulting in the formation of a carboxyl group and a methyl group. FsoE exhibits preferential substrate selectivity toward glycoside substrates over their aglycones. The fuscoatroside biosynthesis is initiated by the cyclization of 2,3(S)-oxidosqualene through FsoA's terpene cyclase (TC) domain, leading to the formation of the fernane skeleton isomotiol, harboring a fernane triterpene skeleton with a C8-C9 double bond. Subsequently, C2-alpha-hydroxylation mediated by fsoD results in the production of 2-alpha-hydroxy-isomotiol, which is further acetylated by fsoF. The glycosyltransferase (GT) domain of FsoA may convert isomotiol, 2-alpha-hydroxy-isomotiol, and the acetylated derivative of 2-alpha-hydroxy-isomotiol into their corresponding glycosides 3-O-(beta-D-glucopyranosyl)-isomotiol, 3-O-(beta-D-glucopyranosyl)-2-alpha-hydroxy-isomotiol, and 3-O-(beta-D-glucopyranosyl)-2-alpha-acetoxy-isomotiol, which then undergo oxidative cleavage under the action of fsoE to form s 2-deacetoxy-fuscoatroside, 2-deacetyl-fuscoatroside, and fuscoatroside, respectively. Although hydroxylation followed by acetylation of 3-O-(beta-D-glucopyranosyl)-isomotiol and 2-deacetoxy-fuscoatroside by fsoD and fsoF could not be ruled out, this process is likely to occur with difficulty due to bulky steric hindrance caused by the presence of a glycan at C3 in these compounds. Interestingly, fsoE can also utilize the aglycones isomotiol and 2-alpha-hydroxy-isomotiol as substrates to generate 19-beta-hydroxy-isomotiol and 2-alpha,19-beta-dihydroxy-isomotiol, respectively. These reactions occur with lower efficiency. Finally, fsoE can further convert 2-alpha,19-beta-dihydroxy-isomotiol into 2-alpha-hydroxy-ismotiol-19-one and 2-alpha-hydroxy-ismotiol-19-one into 2-deacetyl-3-deglucopyranosyl-fuscoatroside. This Humicola fuscoatra protein is Cytochrome P450 monooxygenase fsoE.